Consider the following 386-residue polypeptide: Skeletal aspartic acid-rich protein 1 (386 aa).

Positions 1-24 are cleaved as a signal peptide; that stretch reads MAFVSCFHLRLLFLCLALFMAAEC. Disordered regions lie at residues 33–145 and 244–291; these read VDSD…PFSL and EVTD…DCPH. Acidic residues predominate over residues 63–107; the sequence is YDASDDNDNDNDDDDNNDNDNDNDDDNDVDRDNDNDDDDFDDSND. 2 stretches are compositionally biased toward basic and acidic residues: residues 133 to 142 and 244 to 265; these read HSVESFEDRP and EVTD…KDTP. The span at 266-288 shows a compositional bias: acidic residues; sequence DTDSDPDDSSDNANDGDDDDDDD.

Component of the acid-insoluble and acid-soluble organic matrix of the aragonitic skeleton (at protein level).

The protein resides in the secreted. The protein is Skeletal aspartic acid-rich protein 1 of Acropora millepora (Staghorn coral).